Consider the following 482-residue polypeptide: ATP synthase subunit beta (482 aa).

Position 168-175 (168-175 (GGAGVGKT)) interacts with ATP.

Belongs to the ATPase alpha/beta chains family. In terms of assembly, F-type ATPases have 2 components, CF(1) - the catalytic core - and CF(0) - the membrane proton channel. CF(1) has five subunits: alpha(3), beta(3), gamma(1), delta(1), epsilon(1). CF(0) has three main subunits: a(1), b(2) and c(9-12). The alpha and beta chains form an alternating ring which encloses part of the gamma chain. CF(1) is attached to CF(0) by a central stalk formed by the gamma and epsilon chains, while a peripheral stalk is formed by the delta and b chains.

It localises to the cell membrane. It carries out the reaction ATP + H2O + 4 H(+)(in) = ADP + phosphate + 5 H(+)(out). Functionally, produces ATP from ADP in the presence of a proton gradient across the membrane. The catalytic sites are hosted primarily by the beta subunits. This Corynebacterium urealyticum (strain ATCC 43042 / DSM 7109) protein is ATP synthase subunit beta.